The chain runs to 93 residues: Pyrimidine/purine nucleoside phosphorylase (93 aa).

This sequence belongs to the nucleoside phosphorylase PpnP family.

The enzyme catalyses a purine D-ribonucleoside + phosphate = a purine nucleobase + alpha-D-ribose 1-phosphate. It catalyses the reaction adenosine + phosphate = alpha-D-ribose 1-phosphate + adenine. The catalysed reaction is cytidine + phosphate = cytosine + alpha-D-ribose 1-phosphate. It carries out the reaction guanosine + phosphate = alpha-D-ribose 1-phosphate + guanine. The enzyme catalyses inosine + phosphate = alpha-D-ribose 1-phosphate + hypoxanthine. It catalyses the reaction thymidine + phosphate = 2-deoxy-alpha-D-ribose 1-phosphate + thymine. The catalysed reaction is uridine + phosphate = alpha-D-ribose 1-phosphate + uracil. It carries out the reaction xanthosine + phosphate = alpha-D-ribose 1-phosphate + xanthine. In terms of biological role, catalyzes the phosphorolysis of diverse nucleosides, yielding D-ribose 1-phosphate and the respective free bases. Can use uridine, adenosine, guanosine, cytidine, thymidine, inosine and xanthosine as substrates. Also catalyzes the reverse reactions. This chain is Pyrimidine/purine nucleoside phosphorylase, found in Magnetococcus marinus (strain ATCC BAA-1437 / JCM 17883 / MC-1).